Consider the following 289-residue polypeptide: Phosphatidylserine decarboxylase proenzyme (289 aa).

Residues D92, H149, and S254 each act as charge relay system; for autoendoproteolytic cleavage activity in the active site. Catalysis depends on S254, which acts as the Schiff-base intermediate with substrate; via pyruvic acid; for decarboxylase activity. S254 is subject to Pyruvic acid (Ser); by autocatalysis.

The protein belongs to the phosphatidylserine decarboxylase family. PSD-B subfamily. Prokaryotic type I sub-subfamily. As to quaternary structure, heterodimer of a large membrane-associated beta subunit and a small pyruvoyl-containing alpha subunit. Pyruvate serves as cofactor. Post-translationally, is synthesized initially as an inactive proenzyme. Formation of the active enzyme involves a self-maturation process in which the active site pyruvoyl group is generated from an internal serine residue via an autocatalytic post-translational modification. Two non-identical subunits are generated from the proenzyme in this reaction, and the pyruvate is formed at the N-terminus of the alpha chain, which is derived from the carboxyl end of the proenzyme. The autoendoproteolytic cleavage occurs by a canonical serine protease mechanism, in which the side chain hydroxyl group of the serine supplies its oxygen atom to form the C-terminus of the beta chain, while the remainder of the serine residue undergoes an oxidative deamination to produce ammonia and the pyruvoyl prosthetic group on the alpha chain. During this reaction, the Ser that is part of the protease active site of the proenzyme becomes the pyruvoyl prosthetic group, which constitutes an essential element of the active site of the mature decarboxylase.

The protein resides in the cell membrane. The enzyme catalyses a 1,2-diacyl-sn-glycero-3-phospho-L-serine + H(+) = a 1,2-diacyl-sn-glycero-3-phosphoethanolamine + CO2. It participates in phospholipid metabolism; phosphatidylethanolamine biosynthesis; phosphatidylethanolamine from CDP-diacylglycerol: step 2/2. In terms of biological role, catalyzes the formation of phosphatidylethanolamine (PtdEtn) from phosphatidylserine (PtdSer). The sequence is that of Phosphatidylserine decarboxylase proenzyme from Pseudomonas aeruginosa (strain LESB58).